The sequence spans 480 residues: Sporozoite surface protein P36p (480 aa).

Positions 1–22 are cleaved as a signal peptide; sequence MKRRSIFMYYCFCFLLKYVAFS. 6-Cys domains are found at residues 23–156 and 159–298; these read NVPN…FKKM and KIKG…TSKN. N-linked (GlcNAc...) asparagine glycosylation is found at Asn28, Asn40, Asn92, Asn111, and Asn184. 6 disulfides stabilise this stretch: Cys37-Cys49, Cys63-Cys137, Cys80-Cys135, Cys163-Cys187, Cys201-Cys280, and Cys221-Cys278. Asn294, Asn368, Asn375, Asn392, Asn405, Asn409, and Asn424 each carry an N-linked (GlcNAc...) asparagine glycan. A disordered region spans residues 358–415; sequence KMDSSDDDESNETESSENESNERTHNGNRANKDANNSEKMTGNRRKKNNSINNTNYYS. The span at 362–376 shows a compositional bias: acidic residues; it reads SDDDESNETESSENE. Positions 377-393 are enriched in basic and acidic residues; it reads SNERTHNGNRANKDANN. Residues 406–415 are compositionally biased toward low complexity; the sequence is NSINNTNYYS. Ser457 is lipidated: GPI-anchor amidated serine. Positions 458–480 are cleaved as a propeptide — removed in mature form; sequence SSYYEVFNYFSIAFILIIHMLLL.

The protein localises to the cell surface. The protein resides in the cell membrane. Involved in sporozoite infection of hepatocytes and replication therein. This chain is Sporozoite surface protein P36p (P52), found in Plasmodium yoelii yoelii.